Reading from the N-terminus, the 366-residue chain is Agamous-like MADS-box protein AGL36 (366 aa).

The region spanning 1–59 (MKKVKLSLIANERSRKTSFIKRKDGIFKKLHELSTLCGVQACALIYSPFIPVPESWPSR) is the MADS-box domain. A coiled-coil region spans residues 86–115 (TYLMERITKAKEQLKNLAAENRELQVRRFM).

As to quaternary structure, interacts with AGL62.

It is found in the nucleus. Its function is as follows. Probable transcription factor. This is Agamous-like MADS-box protein AGL36 (AGL36) from Arabidopsis thaliana (Mouse-ear cress).